A 319-amino-acid chain; its full sequence is ATP-dependent 6-phosphofructokinase (319 aa).

ATP is bound at residue Gly-11. 21–25 (RAVVR) provides a ligand contact to ADP. ATP-binding positions include 72 to 73 (RC) and 102 to 105 (GDGS). Asp-103 serves as a coordination point for Mg(2+). 125 to 127 (TID) is a binding site for substrate. Asp-127 acts as the Proton acceptor in catalysis. Arg-154 serves as a coordination point for ADP. Residues Arg-162 and 169–171 (MGR) each bind substrate. ADP-binding positions include 185 to 187 (GAE), Arg-211, and 213 to 215 (KRH). Residues Glu-222, Arg-243, and 249–252 (HVQR) contribute to the substrate site.

It belongs to the phosphofructokinase type A (PFKA) family. ATP-dependent PFK group I subfamily. Prokaryotic clade 'B1' sub-subfamily. In terms of assembly, homotetramer. It depends on Mg(2+) as a cofactor.

The protein localises to the cytoplasm. It carries out the reaction beta-D-fructose 6-phosphate + ATP = beta-D-fructose 1,6-bisphosphate + ADP + H(+). The protein operates within carbohydrate degradation; glycolysis; D-glyceraldehyde 3-phosphate and glycerone phosphate from D-glucose: step 3/4. With respect to regulation, allosterically activated by ADP and other diphosphonucleosides, and allosterically inhibited by phosphoenolpyruvate. Functionally, catalyzes the phosphorylation of D-fructose 6-phosphate to fructose 1,6-bisphosphate by ATP, the first committing step of glycolysis. The chain is ATP-dependent 6-phosphofructokinase from Clostridioides difficile (strain 630) (Peptoclostridium difficile).